A 240-amino-acid polypeptide reads, in one-letter code: DNA repair protein RecO (240 aa).

It belongs to the RecO family.

Its function is as follows. Involved in DNA repair and RecF pathway recombination. The polypeptide is DNA repair protein RecO (Pseudoalteromonas atlantica (strain T6c / ATCC BAA-1087)).